We begin with the raw amino-acid sequence, 145 residues long: Ribosome-binding factor A (145 aa).

A compositionally biased stretch (basic and acidic residues) spans 122–132; it reads KVQRDLESAPR. Positions 122 to 145 are disordered; that stretch reads KVQRDLESAPREDDEGEPDSSSRD.

Belongs to the RbfA family. In terms of assembly, monomer. Binds 30S ribosomal subunits, but not 50S ribosomal subunits or 70S ribosomes.

The protein localises to the cytoplasm. Its function is as follows. One of several proteins that assist in the late maturation steps of the functional core of the 30S ribosomal subunit. Associates with free 30S ribosomal subunits (but not with 30S subunits that are part of 70S ribosomes or polysomes). Required for efficient processing of 16S rRNA. May interact with the 5'-terminal helix region of 16S rRNA. The polypeptide is Ribosome-binding factor A (Methylorubrum extorquens (strain PA1) (Methylobacterium extorquens)).